The chain runs to 461 residues: Phosphatidate cytidylyltransferase 1 (461 aa).

The segment at 1–67 (MLELRHRGSC…IPEIPPSSDR (67 aa)) is disordered. An Omega-N-methylarginine modification is found at Arg-7. Residues 20–56 (PHREGEAAGGDHETESTSDKETDIDDRYGDLDSRTDS) show a composition bias toward basic and acidic residues. Phosphoserine is present on residues Ser-35 and Ser-37. 6 consecutive transmembrane segments (helical) span residues 96-116 (MISL…LLVL), 149-169 (FLLC…FATF), 183-203 (HRFI…LSLV), 230-250 (LVIQ…SSVI), 279-299 (GFIG…YVLS), and 357-377 (IALS…ASGF).

It belongs to the CDS family. As to quaternary structure, homodimer. Interacts with FOS; this interaction may enhance catalytic activity. Mg(2+) is required as a cofactor. As to expression, expressed in adult tissues such as placenta, brain, small intestine, ovary, testis and prostate. Highly expressed in fetal kidney, lung and brain. Lower level in fetal liver.

It is found in the endoplasmic reticulum membrane. It carries out the reaction a 1,2-diacyl-sn-glycero-3-phosphate + CTP + H(+) = a CDP-1,2-diacyl-sn-glycerol + diphosphate. It catalyses the reaction 1-octadecanoyl-2-(5Z,8Z,11Z,14Z-eicosatetraenoyl)-sn-glycero-3-phosphate + CTP + H(+) = 1-octadecanoyl-2-(5Z,8Z,11Z,14Z-eicosatetraenoyl)-sn-glycero-3-cytidine-5'-diphosphate + diphosphate. The catalysed reaction is 1-octadecanoyl-2-(9Z,12Z-octadecadienoyl)-sn-glycero-3-phosphate + CTP + H(+) = 1-octadecanoyl-2-(9Z,12Z-octadecadienoyl)-sn-glycero-3-cytidine-5'-diphosphate + diphosphate. The enzyme catalyses 1-hexadecanoyl-2-(5Z,8Z,11Z,14Z-eicosatetraenoyl)-sn-glycero-3-phosphate + CTP + H(+) = 1-hexadecanoyl-2-(5Z,8Z,11Z,14Z-eicosatetraenoyl)-sn-glycero-3-cytidine-5'-diphosphate + diphosphate. It carries out the reaction 1,2-di-(5Z,8Z,11Z,14Z)-eicosatetraenoyl-sn-glycero-3-phosphate + CTP + H(+) = 1,2-di-(5Z,8Z,11Z,14Z-eicosatetraenoyl)-sn-glycero-3-cytidine-5'-diphosphate + diphosphate. It catalyses the reaction 1-octadecanoyl-2-(9Z-octadecenoyl)-sn-glycero-3-phosphate + CTP + H(+) = 1-octadecanoyl-2-(9Z-octadecenoyl)-sn-glycero-3-cytidine-5'-diphosphate + diphosphate. The catalysed reaction is 1-octadecanoyl-2-(4Z,7Z,10Z,13Z,16Z,19Z-docosahexaenoyl)-sn-glycero-3-phosphate + CTP + H(+) = 1-octadecanoyl-2-(4Z,7Z,10Z,13Z,16Z,19Z-docosahexaenoyl)-sn-glycero-3-cytidine-5'-diphosphate + diphosphate. The enzyme catalyses 1,2-di-(9Z,12Z-octadecadienoyl)-sn-glycero-3-phosphate + CTP + H(+) = 1,2-di-(9Z,12Z-octadecadienoyl)-sn-glycero-3-cytidine-5'-diphosphate + diphosphate. It carries out the reaction 1,2-di-(9Z-octadecenoyl)-sn-glycero-3-phosphate + CTP + H(+) = 1,2-di-(9Z-octadecenoyl)-sn-glycero-3-cytidine-5'-diphosphate + diphosphate. The protein operates within phospholipid metabolism; CDP-diacylglycerol biosynthesis; CDP-diacylglycerol from sn-glycerol 3-phosphate: step 3/3. With respect to regulation, inhibited by its anionic phospholipid end products, with phosphatidylinositol-(4,5)- bisphosphate showing the strongest inhibition. Functionally, catalyzes the conversion of phosphatidic acid (PA) to CDP-diacylglycerol (CDP-DAG), an essential intermediate in the synthesis of phosphatidylglycerol, cardiolipin and phosphatidylinositol. Exhibits almost no acyl chain preference for PA, showing no discrimination for the sn-1/sn-2 acyl chain composition of PAs. Plays an important role in regulating the growth of lipid droplets which are storage organelles at the center of lipid and energy homeostasis. Positively regulates the differentiation and development of adipocytes. The polypeptide is Phosphatidate cytidylyltransferase 1 (Homo sapiens (Human)).